A 568-amino-acid chain; its full sequence is Urocanate hydratase (568 aa).

Residues 58-59 (GG), Gln-136, 182-184 (GMG), Glu-202, Arg-207, 248-249 (NA), 269-273 (QTSAH), 279-280 (YL), and Tyr-328 each bind NAD(+). The active site involves Cys-416. Gly-498 is a binding site for NAD(+).

This sequence belongs to the urocanase family. NAD(+) is required as a cofactor.

It is found in the cytoplasm. It carries out the reaction 4-imidazolone-5-propanoate = trans-urocanate + H2O. Its pathway is amino-acid degradation; L-histidine degradation into L-glutamate; N-formimidoyl-L-glutamate from L-histidine: step 2/3. Functionally, catalyzes the conversion of urocanate to 4-imidazolone-5-propionate. The polypeptide is Urocanate hydratase (Photobacterium profundum (strain SS9)).